We begin with the raw amino-acid sequence, 72 residues long: PAMP-induced secreted peptide 1 (72 aa).

The signal sequence occupies residues 1–30 (MRRVSWSTVLIVVVMVSLFFVEHVVVPAAA). 4-hydroxyproline occurs at positions 65 and 67.

In terms of processing, contains 4-hydroxyproline; hydroxylated on Pro-65 and Pro-67. As to expression, expressed in guard cells, hydathodes, leaf trichomes, and vascular tissues of leaves and roots.

It localises to the secreted. The protein resides in the extracellular space. The protein localises to the apoplast. In terms of biological role, endogenous secreted peptide that acts as elicitor of immune response and positive regulator of defense response. Amplifies the immune response triggered by flg22, the active epitope of bacterial flagellin. Acts as a negative regulator of root growth. The protein is PAMP-induced secreted peptide 1 of Arabidopsis thaliana (Mouse-ear cress).